The sequence spans 398 residues: Dihydrolipoyllysine-residue acetyltransferase component of acetoin cleaving system (398 aa).

The region spanning 2–77 is the Lipoyl-binding domain; that stretch reads AVKVVMPKLG…PPGTAICYIG (76 aa). Residue K43 is modified to N6-lipoyllysine. The Peripheral subunit-binding (PSBD) domain maps to 118–155; it reads KISPVARKIAEKAGLDLKQLKGTGPGGRIVKDDVTKAL. Catalysis depends on residues H371 and D375.

This sequence belongs to the 2-oxoacid dehydrogenase family. It depends on (R)-lipoate as a cofactor.

The catalysed reaction is N(6)-[(R)-dihydrolipoyl]-L-lysyl-[protein] + acetyl-CoA = N(6)-[(R)-S(8)-acetyldihydrolipoyl]-L-lysyl-[protein] + CoA. It participates in ketone degradation; acetoin degradation. The chain is Dihydrolipoyllysine-residue acetyltransferase component of acetoin cleaving system (acoC) from Bacillus subtilis (strain 168).